We begin with the raw amino-acid sequence, 445 residues long: Fibrinogen gamma chain (445 aa).

The N-terminal stretch at Met-1–Ala-25 is a signal peptide. The N-linked (GlcNAc...) asparagine glycan is linked to Asn-78. The Fibrinogen C-terminal domain maps to Arg-170–Asn-416. A disulfide bond links Cys-179 and Cys-208. Ca(2+) is bound by residues Asp-344, Asp-346, and Gly-350. Cys-352 and Cys-365 are disulfide-bonded. The tract at residues Thr-400–Asp-422 is gamma-chain polymerization, binding amino end of another fibrin alpha chain. Residue Gln-424 forms an Isoglutamyl lysine isopeptide (Gln-Lys) (interchain with K-432) linkage. Residues Gln-424–Pro-445 are disordered. Position 431 is a phosphoserine (Ser-431). Lys-432 participates in a covalent cross-link: Isoglutamyl lysine isopeptide (Lys-Gln) (interchain with Q-424). The segment covering Ser-435–Pro-445 has biased composition (basic and acidic residues).

As to quaternary structure, heterohexamer; disulfide linked. Contains 2 sets of 3 non-identical chains (alpha, beta and gamma). The 2 heterotrimers are in head to head conformation with the N-termini in a small central domain. In terms of processing, conversion of fibrinogen to fibrin is triggered by thrombin, which cleaves fibrinopeptides A and B from alpha and beta chains, and thus exposes the N-terminal polymerization sites responsible for the formation of the soft clot. The soft clot is converted into the hard clot by factor XIIIA which catalyzes the epsilon-(gamma-glutamyl)lysine cross-linking between gamma chains (stronger) and between alpha chains (weaker) of different monomers.

The protein localises to the secreted. Its function is as follows. Together with fibrinogen alpha (FGA) and fibrinogen beta (FGB), polymerizes to form an insoluble fibrin matrix. Has a major function in hemostasis as one of the primary components of blood clots. In addition, functions during the early stages of wound repair to stabilize the lesion and guide cell migration during re-epithelialization. Was originally thought to be essential for platelet aggregation, based on in vitro studies using anticoagulated blood. However, subsequent studies have shown that it is not absolutely required for thrombus formation in vivo. Enhances expression of SELP in activated platelets via an ITGB3-dependent pathway. Maternal fibrinogen is essential for successful pregnancy. Fibrin deposition is also associated with infection, where it protects against IFNG-mediated hemorrhage. May also facilitate the antibacterial immune response via both innate and T-cell mediated pathways. This is Fibrinogen gamma chain (Fgg) from Rattus norvegicus (Rat).